The chain runs to 190 residues: Lipid A 1-phosphatase (190 aa).

The next 5 membrane-spanning stretches (helical) occupy residues 22-42 (LLAL…PKVP), 60-80 (FIPT…VGLF), 117-137 (GNFN…AFLM), 145-162 (YFWL…RIYL), and 164-184 (MHTI…VSLF).

The protein belongs to the lipid A LpxE 1-phosphatase family. Does not require divalent cations. serves as cofactor.

The protein localises to the cell inner membrane. It functions in the pathway bacterial outer membrane biogenesis; LPS lipid A biosynthesis. Removes the 1-phosphate group from tetra- and probably hexaacylated lipid A species, has no requirement for the Kdo moiety of lipid A. Has no 4'-phosphatase activity. Has no activity on phospholipids (phosphatidylglycerol, phosphatidylethanolamine or cardiolipin). This enzyme has to act before EptA can attach phosphoethanolamine to the 1-position of lipid A. Absence of the 1-phosphate group renders the bacteria partially resistant to host-derived cationic antimicrobial peptides (CAMP), allowing it to camouflage itself from the host innate immune response, and plays a role in the long-term colonization of the host's stomach. This chain is Lipid A 1-phosphatase, found in Helicobacter pylori (strain ATCC 700392 / 26695) (Campylobacter pylori).